A 240-amino-acid polypeptide reads, in one-letter code: Penton protein H240R (240 aa).

The protein belongs to the asfivirus H240R family.

It is found in the virion. In terms of biological role, forms the penton at the fivefold vertices of the icosahedral capsid. Together with the minor capsid proteins (p17, p49, and M1249L), forms a complicated network immediately below the outer capsid shell, stabilizing the whole capsid. This is Penton protein H240R from African swine fever virus (isolate Tick/South Africa/Pretoriuskop Pr4/1996) (ASFV).